The following is a 311-amino-acid chain: Methionyl-tRNA formyltransferase (311 aa).

110-113 provides a ligand contact to (6S)-5,6,7,8-tetrahydrofolate; that stretch reads SLLP.

The protein belongs to the Fmt family.

The catalysed reaction is L-methionyl-tRNA(fMet) + (6R)-10-formyltetrahydrofolate = N-formyl-L-methionyl-tRNA(fMet) + (6S)-5,6,7,8-tetrahydrofolate + H(+). In terms of biological role, attaches a formyl group to the free amino group of methionyl-tRNA(fMet). The formyl group appears to play a dual role in the initiator identity of N-formylmethionyl-tRNA by promoting its recognition by IF2 and preventing the misappropriation of this tRNA by the elongation apparatus. The polypeptide is Methionyl-tRNA formyltransferase (Streptococcus pyogenes serotype M6 (strain ATCC BAA-946 / MGAS10394)).